The chain runs to 328 residues: Ornithine carbamoyltransferase, catabolic (328 aa).

Carbamoyl phosphate contacts are provided by residues 56 to 59 (STRT), Gln83, Arg107, and 134 to 137 (HPTQ). Residues Asn166, Asp230, and 234 to 235 (SM) contribute to the L-ornithine site. Carbamoyl phosphate is bound by residues 270-271 (CL) and Arg315.

The protein belongs to the aspartate/ornithine carbamoyltransferase superfamily. OTCase family.

The protein resides in the cytoplasm. It catalyses the reaction carbamoyl phosphate + L-ornithine = L-citrulline + phosphate + H(+). The protein operates within amino-acid degradation; L-arginine degradation via ADI pathway; carbamoyl phosphate from L-arginine: step 2/2. In terms of biological role, reversibly catalyzes the transfer of the carbamoyl group from carbamoyl phosphate (CP) to the N(epsilon) atom of ornithine (ORN) to produce L-citrulline. This is Ornithine carbamoyltransferase, catabolic (arcB) from Borreliella afzelii (Borrelia afzelii).